Reading from the N-terminus, the 176-residue chain is MSNKDNDLDDDFSLFREAVQGIKKLPQDTIVQQPNRNTKQKEIKRISREASDSEFYFSDEFVPLLSEEGPTRYARDDVSTYEVKRLRRGVYVPDVFLDMHGMTQQEAKRELGAMIAYCVKNEVHCACVQHGIGKHILKQKTPLWLAQHPDVLAFHQAPLEFGGDGALLVLLSIPEK.

In terms of domain architecture, Smr spans 97 to 172 (LDMHGMTQQE…GDGALLVLLS (76 aa)).

Belongs to the SmrB family. As to quaternary structure, associates with collided ribosomes, but not with correctly translating polysomes.

In terms of biological role, acts as a ribosome collision sensor. Detects stalled/collided disomes (pairs of ribosomes where the leading ribosome is stalled and a second ribosome has collided with it) and endonucleolytically cleaves mRNA at the 5' boundary of the stalled ribosome. Stalled/collided disomes form a new interface (primarily via the 30S subunits) that binds SmrB. Cleaved mRNA becomes available for tmRNA ligation, leading to ribosomal subunit dissociation and rescue of stalled ribosomes. This chain is Ribosome rescue factor SmrB, found in Vibrio vulnificus (strain YJ016).